The chain runs to 151 residues: Small ribosomal subunit protein uS15 (151 aa).

The tract at residues 1-20 (MARLHSGKRGSSGSTRPLRT) is disordered.

This sequence belongs to the universal ribosomal protein uS15 family. As to quaternary structure, part of the 30S ribosomal subunit.

The polypeptide is Small ribosomal subunit protein uS15 (Methanococcus aeolicus (strain ATCC BAA-1280 / DSM 17508 / OCM 812 / Nankai-3)).